A 320-amino-acid polypeptide reads, in one-letter code: MQNRNTFSWVKEQMTRFISVSIMIYVITRTSIANAYPIFAQQGYENPREATGRIVCANCHLANKPVDIEVPQAVLPDTVFEAVVRIPYDKQLKQVLANGKKGSLNVGAVLILPEGFELAPPDRISPEMKEKMGNLAFQSYRPTKKNIIVIGPVPGQKYSEIVFPILSPDPATKKDVHFLKYPIYVGGNRGRGQIYPDGSKSNNTVYNATAAGVVSRILRKEKGGYEITIADASDGHQVVDIIPPGPELLVSEGESIKLDQPLTSNPNVGGFGQGDAEIVLQDPLRVQGLLFFLASVILAQIFLVLKKKQFEKVQLYEMNF.

Positions 1–35 are cleaved as a signal peptide; sequence MQNRNTFSWVKEQMTRFISVSIMIYVITRTSIANA. Tyrosine 36, cysteine 56, cysteine 59, and histidine 60 together coordinate heme. Residues 286 to 306 form a helical membrane-spanning segment; that stretch reads VQGLLFFLASVILAQIFLVLK.

The protein belongs to the cytochrome f family. As to quaternary structure, the 4 large subunits of the cytochrome b6-f complex are cytochrome b6, subunit IV (17 kDa polypeptide, petD), cytochrome f and the Rieske protein, while the 4 small subunits are PetG, PetL, PetM and PetN. The complex functions as a dimer. Requires heme as cofactor.

The protein resides in the plastid. The protein localises to the chloroplast thylakoid membrane. Its function is as follows. Component of the cytochrome b6-f complex, which mediates electron transfer between photosystem II (PSII) and photosystem I (PSI), cyclic electron flow around PSI, and state transitions. The sequence is that of Cytochrome f from Acorus calamus (Sweet flag).